The sequence spans 245 residues: Polyhedrin (245 aa).

It belongs to the polyhedrin family.

Major component of the virus occlusion bodies, which are large proteinaceous structures (polyhedra), that protect the virus from the outside environment for extended periods until they are ingested by insect larvae. This chain is Polyhedrin, found in Lepidoptera (butterflies and moths).